Here is a 122-residue protein sequence, read N- to C-terminus: Seminal vesicle secretory protein 5 (122 aa).

A signal peptide spans 1–21 (MSPTSFFLLTLLLVLVTEARG). A disordered region spans residues 23–122 (RERFSQSAED…KTRVKSRILK (100 aa)). Over residues 27–37 (SQSAEDPSSSH) the composition is skewed to polar residues.

Belongs to the SVP2/SVP5/SVP6 family. In terms of tissue distribution, testis.

It localises to the secreted. The protein resides in the extracellular space. The chain is Seminal vesicle secretory protein 5 (Svs5) from Mus musculus (Mouse).